Consider the following 130-residue polypeptide: Hypocretin neuropeptide precursor (130 aa).

Residues 1-32 (MNFPSTKVPWAAVTLLLLLLLPPALLSLGVDA) form the signal peptide. The residue at position 33 (Gln-33) is a Pyrrolidone carboxylic acid. 2 disulfides stabilise this stretch: Cys-38/Cys-44 and Cys-39/Cys-46. Leu-65 is subject to Leucine amide. Met-96 bears the Methionine amide mark. Positions 97-130 (GRRAGAELEPHPCSGRGCPTVTTTALAPRGGSGV) are excised as a propeptide.

It belongs to the orexin family. In terms of processing, specific enzymatic cleavages at paired basic residues yield the different active peptides. In terms of tissue distribution, restricted to neuronal cell bodies of the dorsal and lateral hypothalamus.

It is found in the rough endoplasmic reticulum. The protein resides in the cytoplasmic vesicle. It localises to the synapse. Its function is as follows. Neuropeptides that play a significant role in the regulation of food intake and sleep-wakefulness, possibly by coordinating the complex behavioral and physiologic responses of these complementary homeostatic functions. A broader role in the homeostatic regulation of energy metabolism, autonomic function, hormonal balance and the regulation of body fluids, is also suggested. Functionally, binds to orexin receptors HCRTR1/OX1R and HCRTR2/OX2R with a high affinity. Stimulates food intake. Modulates pituitary luteinizing hormone secretion in an ovarian steroid-dependent manner. In terms of biological role, binds to orexin receptor HCRTR2/OX2R only. Stimulates food intake. Modulates pituitary luteinizing hormone secretion in an ovarian steroid-dependent manner. The chain is Hypocretin neuropeptide precursor (Hcrt) from Mus musculus (Mouse).